Consider the following 391-residue polypeptide: Ectodysplasin-A (391 aa).

Residues 1–41 (MGYPEVERRELLPAAAPRERGSQGCGCGGAPARAGEGNSCL) lie on the Cytoplasmic side of the membrane. A helical; Signal-anchor for type II membrane protein membrane pass occupies residues 42-62 (LFLGFFGLSLALHLLTLCCYL). Topologically, residues 63–391 (ELRSELRRER…AIRLGEAPAS (329 aa)) are extracellular. Disordered regions lie at residues 73-127 (GAES…HSDS) and 146-245 (YSEE…GTRE). The segment covering 86-101 (TSGTLSSLGGLDPDSP) has biased composition (low complexity). Residues 102-113 (ITSHLGQPSPKQ) show a composition bias toward polar residues. The region spanning 180-229 (GPPGPNGPPGPPGPPGPQGPPGIPGIPGIPGTTVMGPPGPPGPPGPQGPP) is the Collagen-like domain. 2 stretches are compositionally biased toward pro residues: residues 181–203 (PPGP…PGIP) and 216–228 (PPGP…PQGP). The 137-residue stretch at 249 to 385 (AVVHLQGQGS…HTTFFGAIRL (137 aa)) folds into the THD domain. N313 carries N-linked (GlcNAc...) asparagine glycosylation. C332 and C346 form a disulfide bridge. N-linked (GlcNAc...) asparagine glycosylation occurs at N372.

The protein belongs to the tumor necrosis factor family. As to quaternary structure, homotrimer. The homotrimers may then dimerize and form higher-order oligomers. Post-translationally, N-glycosylated. In terms of processing, processing by furin produces a secreted form. As to expression, not abundant; expressed in specific cell types of ectodermal (but not mesodermal) origin of keratinocytes, hair follicles, sweat glands. Also in adult heart, liver, muscle, pancreas, prostate, fetal liver, uterus, small intestine and umbilical cord.

The protein resides in the cell membrane. It is found in the secreted. Functionally, cytokine which is involved in epithelial-mesenchymal signaling during morphogenesis of ectodermal organs. Functions as a ligand activating the DEATH-domain containing receptors EDAR and EDA2R. May also play a role in cell adhesion. In terms of biological role, binds only to the receptor EDAR, while isoform 3 binds exclusively to the receptor EDA2R. Its function is as follows. Binds only to the receptor EDA2R. The polypeptide is Ectodysplasin-A (EDA) (Homo sapiens (Human)).